A 505-amino-acid chain; its full sequence is Flagellin (505 aa).

Belongs to the bacterial flagellin family.

The protein resides in the secreted. The protein localises to the bacterial flagellum. In terms of biological role, flagellin is the subunit protein which polymerizes to form the filaments of bacterial flagella. The polypeptide is Flagellin (fliC) (Salmonella moscow).